We begin with the raw amino-acid sequence, 698 residues long: Serine/alanine racemase (698 aa).

The Cytoplasmic segment spans residues 1–10; that stretch reads MKNKGIDQFR. Residues 11–31 form a helical membrane-spanning segment; sequence VIAAMMVVAIHCLPLHYLWPE. Residues 32–42 are Extracellular-facing; the sequence is GDILITLTIFR. Residues 43 to 63 traverse the membrane as a helical segment; that stretch reads VAVPFFFMISGYYVFAELAVA. Residues 64–81 are Cytoplasmic-facing; the sequence is NSYPSRQRVFNFIKKQLK. A helical transmembrane segment spans residues 82–102; sequence VYLLATLMFLPLALYSQTIGF. The Extracellular portion of the chain corresponds to 103-121; it reads DLPVGTLVQVLLVNGILYH. A helical transmembrane segment spans residues 122 to 142; sequence LWYFPALITGSLLLTSLLIHV. The Cytoplasmic segment spans residues 143–147; the sequence is SFKKV. The helical transmembrane segment at 148–168 threads the bilayer; it reads FWLAAGLYLIGLGGDSWFGLI. Residues 169-183 are Extracellular-facing; that stretch reads QQTPIEPFYTAVFHL. A helical membrane pass occupies residues 184 to 204; that stretch reads LDGTRNGIFFTPLFLCLGVLV. Over 205-216 the chain is Cytoplasmic; the sequence is RKQSEKRSLSKT. The helical transmembrane segment at 217 to 237 threads the bilayer; sequence ALFFLISLIGLLIESAYLHGF. Over 238 to 244 the chain is Extracellular; that stretch reads SIPKHDS. Residues 245-265 traverse the membrane as a helical segment; it reads MYLFLPVVLFFLFPLILRWHP. Over 266-274 the chain is Cytoplasmic; sequence HRTWKHPGQ. Residues 275–295 traverse the membrane as a helical segment; it reads LSLWLYLLHPYTIAGTHFLSQ. The Extracellular portion of the chain corresponds to 296-301; the sequence is KISILQ. A helical membrane pass occupies residues 302–322; it reads NNLINYLVVLILTIGFICLFL. Residues 323-698 lie on the Cytoplasmic side of the membrane; the sequence is RQKHSWFRHK…IGPRVSARIK (376 aa). Residues 332 to 698 are racemase; the sequence is KQTTPVKRAV…IGPRVSARIK (367 aa). The active-site Proton acceptor is lysine 371. An N6-(pyridoxal phosphate)lysine modification is found at lysine 371. Arginine 465 is a binding site for substrate. Tyrosine 597 (proton acceptor) is an active-site residue. Methionine 646 is a substrate binding site.

It in the N-terminal section; belongs to the acyltransferase 3 family. The protein in the C-terminal section; belongs to the alanine racemase family. As to quaternary structure, homodimer. Requires pyridoxal 5'-phosphate as cofactor.

Its subcellular location is the cell membrane. It catalyses the reaction L-alanine = D-alanine. The enzyme catalyses L-serine = D-serine. It functions in the pathway amino-acid biosynthesis; D-alanine biosynthesis; D-alanine from L-alanine: step 1/1. Functionally, catalyzes the interconversion of L-serine and D-serine, and L-alanine and D-alanine. L-alanine is racemized at a rate that is 14% of that of L-serine. Together with VanC/VanC1 and VanXYC, required for vancomycin resistance in E.gallinarum strain BM4174. The protein is Serine/alanine racemase of Enterococcus gallinarum.